A 178-amino-acid chain; its full sequence is Crossover junction endodeoxyribonuclease RuvC (178 aa).

Catalysis depends on residues aspartate 7, glutamate 68, and aspartate 141. Aspartate 7, glutamate 68, and aspartate 141 together coordinate Mg(2+).

This sequence belongs to the RuvC family. As to quaternary structure, homodimer which binds Holliday junction (HJ) DNA. The HJ becomes 2-fold symmetrical on binding to RuvC with unstacked arms; it has a different conformation from HJ DNA in complex with RuvA. In the full resolvosome a probable DNA-RuvA(4)-RuvB(12)-RuvC(2) complex forms which resolves the HJ. Mg(2+) serves as cofactor.

It is found in the cytoplasm. The enzyme catalyses Endonucleolytic cleavage at a junction such as a reciprocal single-stranded crossover between two homologous DNA duplexes (Holliday junction).. Its function is as follows. The RuvA-RuvB-RuvC complex processes Holliday junction (HJ) DNA during genetic recombination and DNA repair. Endonuclease that resolves HJ intermediates. Cleaves cruciform DNA by making single-stranded nicks across the HJ at symmetrical positions within the homologous arms, yielding a 5'-phosphate and a 3'-hydroxyl group; requires a central core of homology in the junction. The consensus cleavage sequence is 5'-(A/T)TT(C/G)-3'. Cleavage occurs on the 3'-side of the TT dinucleotide at the point of strand exchange. HJ branch migration catalyzed by RuvA-RuvB allows RuvC to scan DNA until it finds its consensus sequence, where it cleaves and resolves the cruciform DNA. The sequence is that of Crossover junction endodeoxyribonuclease RuvC from Parafrankia sp. (strain EAN1pec).